Consider the following 203-residue polypeptide: Gramillins biosynthetic cluster protein FGSG_00038 (203 aa).

Its pathway is mycotoxin biosynthesis. Functionally, part of the gene cluster that mediates the biosynthesis of gramillins A and B, bicyclic lipopeptides that induce cell death in maize leaves but not in wheat leaves. The nonribosomal peptide synthetase GRA1 incorporates respectively a glutamic adic (Glu), a leucine (Leu), a serine (Ser), a hydroxyglutamine (HOGln), a 2-amino decanoic acid, and 2 cysteins (CysB and CysA). The biosynthesis of 2-amino decanoic acid incorporated in gramillins could be initiated by a fatty acid synthase composed of the alpha and beta subunits FGSG_00036 and FGSG_11656. The cytochrome P450 monooxygenase FGSG_15680 could hydroxylate the fatty acid chain. Subsequent oxidation to the ketone by the oxidoreductase FGSG_00048 and transamination by aminotransferase FGSG_00049 could form 2-amino-decanoic acid. On the other hand, FGSG_15680 could also be responsible for the HO-modified glutamine at the gamma-position. Whether hydroxylation occurs on the fully assembled product or on the Gln residue prior to assembly into the gramillins requires further proof. The thioredoxin FGSG_00043 could also be required for the disulfide-bond formation between CysA and CysB. The specific involvement of the remaining proteins from the cluster is more difficult to discern, but could have broader regulatory (FGSG_00040 and FGSG_11657) or enzymatic functions (FGSG_00044 and FGSG_00045). The final C-domain of GRA1 does not possess the expected sequence of a termination CT domain, often implicated in macrocyclization and release of a cyclopeptidein fungal NRPs; and the thioesterase FGSG_00047 may act in concert with the terminal C-domain of GRA1 to catalyze the formation of the macrocyclic anhydride and release of the products. The sequence is that of Gramillins biosynthetic cluster protein FGSG_00038 from Gibberella zeae (strain ATCC MYA-4620 / CBS 123657 / FGSC 9075 / NRRL 31084 / PH-1) (Wheat head blight fungus).